The sequence spans 438 residues: ATP-dependent RNA helicase RhlB (438 aa).

Positions Gln-9 to Ala-37 match the Q motif motif. Residues Leu-40–Val-219 enclose the Helicase ATP-binding domain. Ala-53 to Thr-60 provides a ligand contact to ATP. The DEAD box motif lies at Asp-165–Asp-168. Positions Lys-243–Leu-390 constitute a Helicase C-terminal domain. Residues Thr-395 to Ser-438 are disordered. A compositionally biased stretch (basic residues) spans Pro-428–Ser-438.

It belongs to the DEAD box helicase family. RhlB subfamily. Component of the RNA degradosome, which is a multiprotein complex involved in RNA processing and mRNA degradation.

The protein localises to the cytoplasm. It catalyses the reaction ATP + H2O = ADP + phosphate + H(+). DEAD-box RNA helicase involved in RNA degradation. Has RNA-dependent ATPase activity and unwinds double-stranded RNA. The protein is ATP-dependent RNA helicase RhlB of Shewanella baltica (strain OS185).